The sequence spans 82 residues: uncharacterized protein (82 aa).

2 helical membrane passes run 8-28 (LLSAAGILLLALLSCLLLPAP) and 50-70 (LYTVLFCLWFLALGAIEYLVL).

The protein resides in the cell membrane. This is an uncharacterized protein from Klebsiella pneumoniae.